Here is a 120-residue protein sequence, read N- to C-terminus: U13-barytoxin-Tl1a (120 aa).

A signal peptide spans 1–20 (MKTIIVFLSLLVLATKFGDA). 3 disulfide bridges follow: Cys75–Cys90, Cys82–Cys95, and Cys89–Cys109.

The protein belongs to the neurotoxin 14 (magi-1) family. 05 (ICK-7) subfamily. ICK-7 sub-subfamily. Expressed by the venom gland.

Its subcellular location is the secreted. Its function is as follows. Ion channel inhibitor. In Trittame loki (Brush-footed trapdoor spider), this protein is U13-barytoxin-Tl1a.